The primary structure comprises 243 residues: Pleckstrin homology domain-containing family B member 1 (243 aa).

The PH domain maps to 21-128 (ALVRGGWLWR…WKTALMEANS (108 aa)).

As to quaternary structure, binds transducins. Homodimer. Interacts (via PH domain) with MYO1C. Interacts (via PH domain) with MYO7A. Highly expressed in retina and brain. In retina, abundantly expressed in photoreceptors. Isoform 4 is the predominant isoform expressed in mature olfactory receptor neurons and vestibular and cochlear hair cells. Also expressed in cells with possible sensory function, including peripheral retinal ganglion cells, cochlear interdental cells, and neurons of the circumventricular organ (at protein level).

It localises to the membrane. It is found in the cytoplasm. The protein is Pleckstrin homology domain-containing family B member 1 (Plekhb1) of Mus musculus (Mouse).